Reading from the N-terminus, the 1460-residue chain is DNA-directed RNA polymerase III subunit RPC1 (1460 aa).

Residues Cys-67, Cys-70, Cys-77, His-80, Cys-107, Cys-110, and Cys-154 each coordinate Zn(2+). Mg(2+) contacts are provided by Asp-511, Asp-513, and Asp-515. A bridging helix region spans residues 858 to 870 (PPEFLFHAISGRE).

The protein belongs to the RNA polymerase beta' chain family. Component of the RNA polymerase III (Pol III) complex consisting of 17 subunits.

The protein resides in the nucleus. It carries out the reaction RNA(n) + a ribonucleoside 5'-triphosphate = RNA(n+1) + diphosphate. Functionally, DNA-dependent RNA polymerase catalyzes the transcription of DNA into RNA using the four ribonucleoside triphosphates as substrates. Largest and catalytic core component of RNA polymerase III which synthesizes small RNAs, such as 5S rRNA and tRNAs. Forms the polymerase active center together with the second largest subunit. A single-stranded DNA template strand of the promoter is positioned within the central active site cleft of Pol III. A bridging helix emanates from RPC1 and crosses the cleft near the catalytic site and is thought to promote translocation of Pol III by acting as a ratchet that moves the RNA-DNA hybrid through the active site by switching from straight to bent conformations at each step of nucleotide addition. The chain is DNA-directed RNA polymerase III subunit RPC1 (RPO31) from Saccharomyces cerevisiae (strain ATCC 204508 / S288c) (Baker's yeast).